Here is a 117-residue protein sequence, read N- to C-terminus: DNA-directed RNA polymerase subunit omega (117 aa).

Belongs to the RNA polymerase subunit omega family. As to quaternary structure, the RNAP catalytic core consists of 2 alpha, 1 beta, 1 beta' and 1 omega subunit. When a sigma factor is associated with the core the holoenzyme is formed, which can initiate transcription.

The enzyme catalyses RNA(n) + a ribonucleoside 5'-triphosphate = RNA(n+1) + diphosphate. In terms of biological role, promotes RNA polymerase assembly. Latches the N- and C-terminal regions of the beta' subunit thereby facilitating its interaction with the beta and alpha subunits. In Cereibacter sphaeroides (strain ATCC 17029 / ATH 2.4.9) (Rhodobacter sphaeroides), this protein is DNA-directed RNA polymerase subunit omega.